A 252-amino-acid chain; its full sequence is Pimeloyl-[acyl-carrier protein] methyl ester esterase (252 aa).

The region spanning 15–239 (LVMLHGWAMH…FPHCGHAPFL (225 aa)) is the AB hydrolase-1 domain. Substrate is bound by residues W21, 81-82 (SL), and 143-147 (FLTLQ). Catalysis depends on S81, which acts as the Nucleophile. Catalysis depends on residues D207 and H235. Residue H235 coordinates substrate.

The protein belongs to the AB hydrolase superfamily. Carboxylesterase BioH family. In terms of assembly, monomer.

The protein localises to the cytoplasm. It carries out the reaction 6-carboxyhexanoyl-[ACP] methyl ester + H2O = 6-carboxyhexanoyl-[ACP] + methanol + H(+). It participates in cofactor biosynthesis; biotin biosynthesis. Functionally, the physiological role of BioH is to remove the methyl group introduced by BioC when the pimeloyl moiety is complete. It allows to synthesize pimeloyl-ACP via the fatty acid synthetic pathway through the hydrolysis of the ester bonds of pimeloyl-ACP esters. This is Pimeloyl-[acyl-carrier protein] methyl ester esterase from Nitrosomonas europaea (strain ATCC 19718 / CIP 103999 / KCTC 2705 / NBRC 14298).